A 74-amino-acid polypeptide reads, in one-letter code: Exodeoxyribonuclease 7 small subunit (74 aa).

The protein belongs to the XseB family. As to quaternary structure, heterooligomer composed of large and small subunits.

Its subcellular location is the cytoplasm. It catalyses the reaction Exonucleolytic cleavage in either 5'- to 3'- or 3'- to 5'-direction to yield nucleoside 5'-phosphates.. Bidirectionally degrades single-stranded DNA into large acid-insoluble oligonucleotides, which are then degraded further into small acid-soluble oligonucleotides. The sequence is that of Exodeoxyribonuclease 7 small subunit from Leuconostoc citreum (strain KM20).